Here is a 57-residue protein sequence, read N- to C-terminus: uncharacterized protein (57 aa).

A helical membrane pass occupies residues alanine 34–valine 54.

The protein resides in the membrane. This is an uncharacterized protein from Dictyostelium discoideum (Social amoeba).